Here is a 39-residue protein sequence, read N- to C-terminus: Natriuretic peptide HsNP-a (39 aa).

Positions 1-8 (SGSKTAKI) are excised as a propeptide. An intrachain disulfide couples Cys12 to Cys28.

Belongs to the natriuretic peptide family. Expressed by the venom gland.

It is found in the secreted. Functionally, snake venom natriuretic peptide that targets both NPR1 and NPR2. Exhibits hypotensive and vasodepressor activities. The sequence is that of Natriuretic peptide HsNP-a from Hoplocephalus stephensii (Stephens's banded snake).